We begin with the raw amino-acid sequence, 244 residues long: HTH-type transcriptional regulator RdgA (244 aa).

The HTH cro/C1-type domain occupies Leu-9–Leu-62. Residues Gln-20–Val-39 constitute a DNA-binding region (H-T-H motif).

Its function is as follows. Regulates pectin lyase production in response to DNA damage. The chain is HTH-type transcriptional regulator RdgA (rdgA) from Pectobacterium carotovorum subsp. carotovorum (Erwinia carotovora subsp. carotovora).